The sequence spans 337 residues: Heme A synthase (337 aa).

The next 5 membrane-spanning stretches (helical) occupy residues 6 to 26 (ITKW…IGGI), 87 to 107 (FIHR…LIYF), 119 to 139 (LPYI…WYMV), 154 to 174 (LAFH…QLIK), and 192 to 212 (LIFS…GALV). His-256 contacts heme. Helical transmembrane passes span 258 to 278 (LVGY…LKIE), 285 to 305 (IAYF…LTLL), and 308 to 328 (VPII…SIII). His-316 contacts heme.

The protein belongs to the COX15/CtaA family. Type 2 subfamily. In terms of assembly, interacts with CtaB. Requires heme b as cofactor.

Its subcellular location is the cell membrane. It catalyses the reaction Fe(II)-heme o + 2 A + H2O = Fe(II)-heme a + 2 AH2. It functions in the pathway porphyrin-containing compound metabolism; heme A biosynthesis; heme A from heme O: step 1/1. Catalyzes the conversion of heme O to heme A by two successive hydroxylations of the methyl group at C8. The first hydroxylation forms heme I, the second hydroxylation results in an unstable dihydroxymethyl group, which spontaneously dehydrates, resulting in the formyl group of heme A. The sequence is that of Heme A synthase from Rickettsia conorii (strain ATCC VR-613 / Malish 7).